Reading from the N-terminus, the 476-residue chain is NADH-quinone oxidoreductase subunit N (476 aa).

A run of 14 helical transmembrane segments spans residues 10–30, 42–62, 77–97, 108–128, 129–149, 162–182, 202–222, 234–254, 268–288, 296–316, 323–343, 368–388, 392–412, and 445–465; these read AVLP…IGAI, LAIA…AVTI, FMKV…VDWL, AVLV…GDLI, ALYL…AINR, FVLG…IYGF, LVFG…AVPF, PTPV…AVFV, WQQI…FAAI, LLAY…AAGT, VLLY…CVLA, ALAL…AGFV, YVFL…GVVA, and AVLA…TPLI.

The protein belongs to the complex I subunit 2 family. NDH-1 is composed of 14 different subunits. Subunits NuoA, H, J, K, L, M, N constitute the membrane sector of the complex.

Its subcellular location is the cell inner membrane. The catalysed reaction is a quinone + NADH + 5 H(+)(in) = a quinol + NAD(+) + 4 H(+)(out). In terms of biological role, NDH-1 shuttles electrons from NADH, via FMN and iron-sulfur (Fe-S) centers, to quinones in the respiratory chain. The immediate electron acceptor for the enzyme in this species is believed to be ubiquinone. Couples the redox reaction to proton translocation (for every two electrons transferred, four hydrogen ions are translocated across the cytoplasmic membrane), and thus conserves the redox energy in a proton gradient. This chain is NADH-quinone oxidoreductase subunit N, found in Azorhizobium caulinodans (strain ATCC 43989 / DSM 5975 / JCM 20966 / LMG 6465 / NBRC 14845 / NCIMB 13405 / ORS 571).